We begin with the raw amino-acid sequence, 130 residues long: MNYTVLVIGPPYSTQNSTSAFLFSRAVILNHHKLLSIFFYCDGALNANKFISPNFNECNLVEEWTWLHNKYLVKLCVCVSAALRRGVIDVVSNTKQNKNIKVGNLKSSFFLTGLGEFSNYLKISDRVIQF.

Catalysis depends on Cys-78, which acts as the Cysteine persulfide intermediate.

It belongs to the DsrE/TusD family. As to quaternary structure, heterohexamer, formed by a dimer of trimers. The hexameric TusBCD complex contains 2 copies each of TusB, TusC and TusD. The TusBCD complex interacts with TusE.

Its subcellular location is the cytoplasm. Functionally, part of a sulfur-relay system required for 2-thiolation of 5-methylaminomethyl-2-thiouridine (mnm(5)s(2)U) at tRNA wobble positions. Accepts sulfur from TusA and transfers it in turn to TusE. The protein is Sulfurtransferase TusD of Buchnera aphidicola subsp. Baizongia pistaciae (strain Bp).